A 277-amino-acid chain; its full sequence is Putative phosphoenolpyruvate synthase regulatory protein (277 aa).

157–164 (GVSRSGKT) provides a ligand contact to ADP.

Belongs to the pyruvate, phosphate/water dikinase regulatory protein family. PSRP subfamily.

It carries out the reaction [pyruvate, water dikinase] + ADP = [pyruvate, water dikinase]-phosphate + AMP + H(+). The catalysed reaction is [pyruvate, water dikinase]-phosphate + phosphate + H(+) = [pyruvate, water dikinase] + diphosphate. Its function is as follows. Bifunctional serine/threonine kinase and phosphorylase involved in the regulation of the phosphoenolpyruvate synthase (PEPS) by catalyzing its phosphorylation/dephosphorylation. The chain is Putative phosphoenolpyruvate synthase regulatory protein from Vibrio vulnificus (strain CMCP6).